Reading from the N-terminus, the 257-residue chain is Thiazole synthase (257 aa).

The active-site Schiff-base intermediate with DXP is Lys95. 1-deoxy-D-xylulose 5-phosphate contacts are provided by residues Gly156, 182-183 (AG), and 204-205 (NT).

Belongs to the ThiG family. In terms of assembly, homotetramer. Forms heterodimers with either ThiH or ThiS.

Its subcellular location is the cytoplasm. It catalyses the reaction [ThiS sulfur-carrier protein]-C-terminal-Gly-aminoethanethioate + 2-iminoacetate + 1-deoxy-D-xylulose 5-phosphate = [ThiS sulfur-carrier protein]-C-terminal Gly-Gly + 2-[(2R,5Z)-2-carboxy-4-methylthiazol-5(2H)-ylidene]ethyl phosphate + 2 H2O + H(+). The protein operates within cofactor biosynthesis; thiamine diphosphate biosynthesis. In terms of biological role, catalyzes the rearrangement of 1-deoxy-D-xylulose 5-phosphate (DXP) to produce the thiazole phosphate moiety of thiamine. Sulfur is provided by the thiocarboxylate moiety of the carrier protein ThiS. In vitro, sulfur can be provided by H(2)S. The chain is Thiazole synthase from Fusobacterium nucleatum subsp. nucleatum (strain ATCC 25586 / DSM 15643 / BCRC 10681 / CIP 101130 / JCM 8532 / KCTC 2640 / LMG 13131 / VPI 4355).